A 156-amino-acid polypeptide reads, in one-letter code: Endoribonuclease YbeY (156 aa).

Zn(2+)-binding residues include histidine 117, histidine 121, and histidine 127.

Belongs to the endoribonuclease YbeY family. Requires Zn(2+) as cofactor.

The protein resides in the cytoplasm. In terms of biological role, single strand-specific metallo-endoribonuclease involved in late-stage 70S ribosome quality control and in maturation of the 3' terminus of the 16S rRNA. This is Endoribonuclease YbeY from Shewanella halifaxensis (strain HAW-EB4).